Reading from the N-terminus, the 138-residue chain is Basic phospholipase A2 PL-X' (138 aa).

Positions 1–16 are cleaved as a signal peptide; sequence MRTLWIMAVLLVGVEG. Disulfide bonds link Cys42–Cys131, Cys44–Cys60, Cys59–Cys111, Cys65–Cys138, Cys66–Cys104, Cys73–Cys97, and Cys91–Cys102. 3 residues coordinate Ca(2+): Tyr43, Gly45, and Gly47. The active site involves His63. A Ca(2+)-binding site is contributed by Asp64. Asp105 is an active-site residue.

The protein belongs to the phospholipase A2 family. Group II subfamily. D49 sub-subfamily. Ca(2+) serves as cofactor. Expressed by the venom gland.

It is found in the secreted. It carries out the reaction a 1,2-diacyl-sn-glycero-3-phosphocholine + H2O = a 1-acyl-sn-glycero-3-phosphocholine + a fatty acid + H(+). PLA2 catalyzes the calcium-dependent hydrolysis of the 2-acyl groups in 3-sn-phosphoglycerides. The polypeptide is Basic phospholipase A2 PL-X' (Protobothrops flavoviridis (Habu)).